Consider the following 753-residue polypeptide: 5-methyltetrahydropteroyltriglutamate--homocysteine methyltransferase (753 aa).

5-methyltetrahydropteroyltri-L-glutamate is bound by residues 17–20 (RELK) and Lys-117. L-homocysteine-binding positions include 431–433 (IGS) and Glu-484. L-methionine-binding positions include 431 to 433 (IGS) and Glu-484. Residues 515 to 516 (RC) and Trp-561 contribute to the 5-methyltetrahydropteroyltri-L-glutamate site. Asp-599 provides a ligand contact to L-homocysteine. Asp-599 contacts L-methionine. Glu-605 serves as a coordination point for 5-methyltetrahydropteroyltri-L-glutamate. Positions 641, 643, and 665 each coordinate Zn(2+). Catalysis depends on His-694, which acts as the Proton donor. Residue Cys-726 coordinates Zn(2+).

Belongs to the vitamin-B12 independent methionine synthase family. Zn(2+) is required as a cofactor.

It catalyses the reaction 5-methyltetrahydropteroyltri-L-glutamate + L-homocysteine = tetrahydropteroyltri-L-glutamate + L-methionine. It participates in amino-acid biosynthesis; L-methionine biosynthesis via de novo pathway; L-methionine from L-homocysteine (MetE route): step 1/1. In terms of biological role, catalyzes the transfer of a methyl group from 5-methyltetrahydrofolate to homocysteine resulting in methionine formation. The polypeptide is 5-methyltetrahydropteroyltriglutamate--homocysteine methyltransferase (Citrobacter koseri (strain ATCC BAA-895 / CDC 4225-83 / SGSC4696)).